Reading from the N-terminus, the 376-residue chain is DNA replication and repair protein RecF (376 aa).

35–42 contacts ATP; it reads GDNGSGKT.

The protein belongs to the RecF family.

The protein localises to the cytoplasm. Functionally, the RecF protein is involved in DNA metabolism; it is required for DNA replication and normal SOS inducibility. RecF binds preferentially to single-stranded, linear DNA. It also seems to bind ATP. This chain is DNA replication and repair protein RecF, found in Agrobacterium fabrum (strain C58 / ATCC 33970) (Agrobacterium tumefaciens (strain C58)).